The chain runs to 692 residues: Putative ESX-1 scaffolding and assembly protein SaeA (692 aa).

Basic and acidic residues predominate over residues 1 to 21 (MGERGELVSDLHPSDDHDADP). Disordered stretches follow at residues 1-23 (MGERGELVSDLHPSDDHDADPRL) and 87-134 (PAAP…TTGF). The segment covering 89–107 (APEPDPPPVPEPQPEPEPG) has biased composition (pro residues).

Its function is as follows. May be involved in assembly of the ESX-1 / type VII specialized secretion system (T7SS), which exports several proteins including EsxA and EsxB. Involved in DNA conjugation in recipient (MKD8) but not donor (mc(2)155) strain. The polypeptide is Putative ESX-1 scaffolding and assembly protein SaeA (saeA) (Mycolicibacterium smegmatis (strain MKD8) (Mycobacterium smegmatis)).